The chain runs to 753 residues: 5-methyltetrahydropteroyltriglutamate--homocysteine methyltransferase (753 aa).

Residues 17-20 (RELK) and Lys-117 contribute to the 5-methyltetrahydropteroyltri-L-glutamate site. L-homocysteine is bound by residues 431–433 (IGS) and Glu-484. Residues 431–433 (IGS) and Glu-484 contribute to the L-methionine site. 5-methyltetrahydropteroyltri-L-glutamate is bound by residues 515 to 516 (RC) and Trp-561. Residue Asp-599 coordinates L-homocysteine. Asp-599 serves as a coordination point for L-methionine. 5-methyltetrahydropteroyltri-L-glutamate is bound at residue Glu-605. His-641, Cys-643, and Glu-665 together coordinate Zn(2+). His-694 functions as the Proton donor in the catalytic mechanism. A Zn(2+)-binding site is contributed by Cys-726.

Belongs to the vitamin-B12 independent methionine synthase family. Requires Zn(2+) as cofactor.

It catalyses the reaction 5-methyltetrahydropteroyltri-L-glutamate + L-homocysteine = tetrahydropteroyltri-L-glutamate + L-methionine. Its pathway is amino-acid biosynthesis; L-methionine biosynthesis via de novo pathway; L-methionine from L-homocysteine (MetE route): step 1/1. Catalyzes the transfer of a methyl group from 5-methyltetrahydrofolate to homocysteine resulting in methionine formation. This Escherichia coli O9:H4 (strain HS) protein is 5-methyltetrahydropteroyltriglutamate--homocysteine methyltransferase.